The sequence spans 241 residues: General transcription factor IIF subunit 2 (241 aa).

This sequence belongs to the TFIIF beta subunit family. In terms of assembly, heterodimer of an alpha and a beta subunit.

The protein resides in the nucleus. Its function is as follows. TFIIF is a general transcription initiation factor that binds to RNA polymerase II and helps to recruit it to the initiation complex in collaboration with TFIIB. The chain is General transcription factor IIF subunit 2 (gtf2f2) from Dictyostelium discoideum (Social amoeba).